The chain runs to 88 residues: Alpha-latrotoxin associated low molecular weight protein 2 (88 aa).

Residues 1–19 (MLKLICIAFLVTVLTLVAG) form the signal peptide. 3 disulfides stabilise this stretch: Cys30–Cys66, Cys46–Cys62, and Cys49–Cys75.

This sequence belongs to the arthropod CHH/MIH/GIH/VIH hormone family. Expressed by the venom gland.

It localises to the secreted. Its function is as follows. May increase the toxicity of alpha-latrotoxin and/or other venom components. Is non-toxic to mice and to the cockroach Periplaneta americana. In Latrodectus hesperus (Western black widow spider), this protein is Alpha-latrotoxin associated low molecular weight protein 2.